Reading from the N-terminus, the 215-residue chain is UPF0502 protein YceH (215 aa).

Lys-80 carries the N6-acetyllysine modification.

Belongs to the UPF0502 family.

This is UPF0502 protein YceH from Escherichia coli O157:H7.